A 75-amino-acid polypeptide reads, in one-letter code: UPF0181 protein ETA_15280 (75 aa).

It belongs to the UPF0181 family.

In Erwinia tasmaniensis (strain DSM 17950 / CFBP 7177 / CIP 109463 / NCPPB 4357 / Et1/99), this protein is UPF0181 protein ETA_15280.